We begin with the raw amino-acid sequence, 149 residues long: D-aminoacyl-tRNA deacylase (149 aa).

Residues 137–138 (GP) carry the Gly-cisPro motif, important for rejection of L-amino acids motif.

It belongs to the DTD family. Homodimer.

It localises to the cytoplasm. It carries out the reaction glycyl-tRNA(Ala) + H2O = tRNA(Ala) + glycine + H(+). The catalysed reaction is a D-aminoacyl-tRNA + H2O = a tRNA + a D-alpha-amino acid + H(+). Its function is as follows. An aminoacyl-tRNA editing enzyme that deacylates mischarged D-aminoacyl-tRNAs. Also deacylates mischarged glycyl-tRNA(Ala), protecting cells against glycine mischarging by AlaRS. Acts via tRNA-based rather than protein-based catalysis; rejects L-amino acids rather than detecting D-amino acids in the active site. By recycling D-aminoacyl-tRNA to D-amino acids and free tRNA molecules, this enzyme counteracts the toxicity associated with the formation of D-aminoacyl-tRNA entities in vivo and helps enforce protein L-homochirality. The chain is D-aminoacyl-tRNA deacylase from Leuconostoc mesenteroides subsp. mesenteroides (strain ATCC 8293 / DSM 20343 / BCRC 11652 / CCM 1803 / JCM 6124 / NCDO 523 / NBRC 100496 / NCIMB 8023 / NCTC 12954 / NRRL B-1118 / 37Y).